The sequence spans 205 residues: Adenylyl-sulfate kinase (205 aa).

An ATP-binding site is contributed by 31-38 (GLSGAGKS). Serine 105 serves as the catalytic Phosphoserine intermediate.

Belongs to the APS kinase family.

It catalyses the reaction adenosine 5'-phosphosulfate + ATP = 3'-phosphoadenylyl sulfate + ADP + H(+). It functions in the pathway sulfur metabolism; hydrogen sulfide biosynthesis; sulfite from sulfate: step 2/3. Functionally, catalyzes the synthesis of activated sulfate. The polypeptide is Adenylyl-sulfate kinase (Shewanella oneidensis (strain ATCC 700550 / JCM 31522 / CIP 106686 / LMG 19005 / NCIMB 14063 / MR-1)).